Consider the following 203-residue polypeptide: Peptidyl-tRNA hydrolase (203 aa).

Residue tyrosine 26 participates in tRNA binding. Catalysis depends on histidine 31, which acts as the Proton acceptor. 3 residues coordinate tRNA: tyrosine 82, asparagine 84, and asparagine 130.

The protein belongs to the PTH family. In terms of assembly, monomer.

Its subcellular location is the cytoplasm. It catalyses the reaction an N-acyl-L-alpha-aminoacyl-tRNA + H2O = an N-acyl-L-amino acid + a tRNA + H(+). Hydrolyzes ribosome-free peptidyl-tRNAs (with 1 or more amino acids incorporated), which drop off the ribosome during protein synthesis, or as a result of ribosome stalling. In terms of biological role, catalyzes the release of premature peptidyl moieties from peptidyl-tRNA molecules trapped in stalled 50S ribosomal subunits, and thus maintains levels of free tRNAs and 50S ribosomes. In Streptomyces avermitilis (strain ATCC 31267 / DSM 46492 / JCM 5070 / NBRC 14893 / NCIMB 12804 / NRRL 8165 / MA-4680), this protein is Peptidyl-tRNA hydrolase.